A 270-amino-acid chain; its full sequence is NADPH-dependent 7-cyano-7-deazaguanine reductase (270 aa).

A substrate-binding site is contributed by 79–81; that stretch reads IES. An NADPH-binding site is contributed by 81 to 82; the sequence is SK. The active-site Thioimide intermediate is Cys177. Asp184 serves as the catalytic Proton donor. Substrate is bound at residue 216–217; sequence HE. 245–246 contacts NADPH; sequence RG.

The protein belongs to the GTP cyclohydrolase I family. QueF type 2 subfamily. Homodimer.

The protein resides in the cytoplasm. It carries out the reaction 7-aminomethyl-7-carbaguanine + 2 NADP(+) = 7-cyano-7-deazaguanine + 2 NADPH + 3 H(+). It functions in the pathway tRNA modification; tRNA-queuosine biosynthesis. Its function is as follows. Catalyzes the NADPH-dependent reduction of 7-cyano-7-deazaguanine (preQ0) to 7-aminomethyl-7-deazaguanine (preQ1). This chain is NADPH-dependent 7-cyano-7-deazaguanine reductase, found in Acinetobacter baumannii (strain AB307-0294).